The following is a 121-amino-acid chain: Small ribosomal subunit protein uS13 (121 aa).

Positions 94–121 (GLPVRGQSSKTNARTVKGPRKTVANKKK) are disordered. A compositionally biased stretch (basic residues) spans 110-121 (KGPRKTVANKKK).

The protein belongs to the universal ribosomal protein uS13 family. Part of the 30S ribosomal subunit. Forms a loose heterodimer with protein S19. Forms two bridges to the 50S subunit in the 70S ribosome.

Located at the top of the head of the 30S subunit, it contacts several helices of the 16S rRNA. In the 70S ribosome it contacts the 23S rRNA (bridge B1a) and protein L5 of the 50S subunit (bridge B1b), connecting the 2 subunits; these bridges are implicated in subunit movement. Contacts the tRNAs in the A and P-sites. This chain is Small ribosomal subunit protein uS13, found in Mesoplasma florum (strain ATCC 33453 / NBRC 100688 / NCTC 11704 / L1) (Acholeplasma florum).